A 196-amino-acid polypeptide reads, in one-letter code: Segregation and condensation protein B (196 aa).

It belongs to the ScpB family. In terms of assembly, homodimer. Homodimerization may be required to stabilize the binding of ScpA to the Smc head domains. Component of a cohesin-like complex composed of ScpA, ScpB and the Smc homodimer, in which ScpA and ScpB bind to the head domain of Smc. The presence of the three proteins is required for the association of the complex with DNA.

Its subcellular location is the cytoplasm. Its function is as follows. Participates in chromosomal partition during cell division. May act via the formation of a condensin-like complex containing Smc and ScpA that pull DNA away from mid-cell into both cell halves. The chain is Segregation and condensation protein B from Lactobacillus johnsonii (strain CNCM I-12250 / La1 / NCC 533).